The following is a 524-amino-acid chain: Caffeate CoA-transferase (524 aa).

Glutamate 323 acts as the 5-glutamyl coenzyme A thioester intermediate in catalysis.

Belongs to the 3-oxoacid CoA-transferase family. In terms of assembly, homodimer.

The enzyme catalyses hydrocaffeoyl-CoA + (E)-caffeate = 3-(3,4-dihydroxyphenyl)propanoate + (E)-caffeoyl-CoA. Functionally, involved in caffeate respiration, which consists in the reduction of the C-C double bond of caffeate. CarA catalyzes an energy-saving CoA loop for caffeate activation in the steady state of caffeate respiration. It catalyzes the formation of caffeyl-CoA from caffeate with hydrocaffeyl-CoA as the CoA donor via a ping-pong mechanism. In addition to caffeate, the enzyme can utilize 4-coumarate or ferulate as CoA acceptor. Neither acetyl-CoA nor butyryl-CoA served as the CoA donor. This Acetobacterium woodii protein is Caffeate CoA-transferase.